We begin with the raw amino-acid sequence, 344 residues long: Zinc transporter 9 (344 aa).

The helical transmembrane segment at 1 to 21 threads the bilayer; the sequence is MASILISGAAGVSIPLVGTLL. Topologically, residues 22–30 are cytoplasmic; it reads PLNGGLMRG. The helical transmembrane segment at 31–51 threads the bilayer; that stretch reads AKAFAAGVILATGFVHMLSGG. The Extracellular segment spans residues 52-72; that stretch reads SKALSDPCLPEFPWKMFPFPE. The chain crosses the membrane as a helical span at residues 73 to 93; it reads FFAMVAALLTLLADFMITGYY. Residues 94–188 are Cytoplasmic-facing; the sequence is ERKQEKMMNQ…DVGLDSGVRH (95 aa). The helical transmembrane segment at 189-209 threads the bilayer; that stretch reads VVVSQILEMGIVSHSIIIGIS. Residues 210–221 lie on the Extracellular side of the membrane; it reads LGVSHSPCTIRP. A helical transmembrane segment spans residues 222–242; sequence LLLALSFHQFFEGFALGGCVA. The Cytoplasmic portion of the chain corresponds to 243-251; that stretch reads EARLTPRGS. A helical transmembrane segment spans residues 252-272; the sequence is AMMAFFFAITTPIGVAVGTAI. Residues 273–291 are Extracellular-facing; that stretch reads ASSYNSYSVAALVAEGVLD. The chain crosses the membrane as a helical span at residues 292–312; that stretch reads SLSAGILVYMALVDLIAADFL. Residues 313–323 lie on the Cytoplasmic side of the membrane; it reads SKKMSVDFRVQ. The helical transmembrane segment at 324 to 344 threads the bilayer; the sequence is VVSYCFLFLGAGMMSALAIWA.

The protein belongs to the ZIP transporter (TC 2.A.5) family.

It localises to the cell membrane. Its function is as follows. Zinc transporter involved in zinc uptake in roots. Targeted by BZIP19 transcription factor in response to zinc-deficient conditions. The polypeptide is Zinc transporter 9 (ZIP9) (Arabidopsis thaliana (Mouse-ear cress)).